A 326-amino-acid chain; its full sequence is Aspartate carbamoyltransferase catalytic subunit (326 aa).

Positions 58 and 59 each coordinate carbamoyl phosphate. Lysine 86 is an L-aspartate binding site. The carbamoyl phosphate site is built by arginine 108, histidine 141, and glutamine 144. Arginine 181 and arginine 239 together coordinate L-aspartate. Residues glycine 280 and proline 281 each coordinate carbamoyl phosphate.

Belongs to the aspartate/ornithine carbamoyltransferase superfamily. ATCase family. Heterododecamer (2C3:3R2) of six catalytic PyrB chains organized as two trimers (C3), and six regulatory PyrI chains organized as three dimers (R2).

The enzyme catalyses carbamoyl phosphate + L-aspartate = N-carbamoyl-L-aspartate + phosphate + H(+). The protein operates within pyrimidine metabolism; UMP biosynthesis via de novo pathway; (S)-dihydroorotate from bicarbonate: step 2/3. Catalyzes the condensation of carbamoyl phosphate and aspartate to form carbamoyl aspartate and inorganic phosphate, the committed step in the de novo pyrimidine nucleotide biosynthesis pathway. This is Aspartate carbamoyltransferase catalytic subunit from Synechococcus sp. (strain JA-3-3Ab) (Cyanobacteria bacterium Yellowstone A-Prime).